A 434-amino-acid polypeptide reads, in one-letter code: Serine hydroxymethyltransferase (434 aa).

Residues Leu132 and 136 to 138 (GHL) each bind (6S)-5,6,7,8-tetrahydrofolate. Lys241 is modified (N6-(pyridoxal phosphate)lysine).

This sequence belongs to the SHMT family. As to quaternary structure, homodimer. Requires pyridoxal 5'-phosphate as cofactor.

The protein localises to the cytoplasm. The enzyme catalyses (6R)-5,10-methylene-5,6,7,8-tetrahydrofolate + glycine + H2O = (6S)-5,6,7,8-tetrahydrofolate + L-serine. It participates in one-carbon metabolism; tetrahydrofolate interconversion. The protein operates within amino-acid biosynthesis; glycine biosynthesis; glycine from L-serine: step 1/1. Functionally, catalyzes the reversible interconversion of serine and glycine with tetrahydrofolate (THF) serving as the one-carbon carrier. This reaction serves as the major source of one-carbon groups required for the biosynthesis of purines, thymidylate, methionine, and other important biomolecules. Also exhibits THF-independent aldolase activity toward beta-hydroxyamino acids, producing glycine and aldehydes, via a retro-aldol mechanism. The sequence is that of Serine hydroxymethyltransferase from Kineococcus radiotolerans (strain ATCC BAA-149 / DSM 14245 / SRS30216).